A 239-amino-acid chain; its full sequence is Tetraspanin-9 (239 aa).

The Cytoplasmic segment spans residues 1-13 (MARGCLCCVKYMM). Residues 14 to 34 (FLFNLLFWLSGCGLLGVGIWL) form a helical membrane-spanning segment. Residues 35 to 55 (SVSQGSFATFSPSFPSLSAAN) lie on the Extracellular side of the membrane. The helical transmembrane segment at 56-76 (LVITLGSVVMVTGFLGCLGAI) threads the bilayer. Residues 77–85 (KENKCLLLS) lie on the Cytoplasmic side of the membrane. The helical transmembrane segment at 86–106 (FFIVLLIILLAELILLILFFV) threads the bilayer. Residues 107–203 (YTEKVSENAK…VEEWLNDNKH (97 aa)) lie on the Extracellular side of the membrane. Residue Asn-180 is glycosylated (N-linked (GlcNAc...) asparagine). A helical transmembrane segment spans residues 204 to 224 (LLGTIAMCVLVLQLLGMAFSM). The Cytoplasmic segment spans residues 225–239 (TLYQQIHRAGKKYDA).

The protein belongs to the tetraspanin (TM4SF) family.

Its subcellular location is the membrane. The chain is Tetraspanin-9 (tspan9) from Danio rerio (Zebrafish).